Reading from the N-terminus, the 240-residue chain is DNA repair protein RecO (240 aa).

It belongs to the RecO family.

Functionally, involved in DNA repair and RecF pathway recombination. This Actinobacillus pleuropneumoniae serotype 5b (strain L20) protein is DNA repair protein RecO.